Reading from the N-terminus, the 512-residue chain is Cytochrome P450 1A1 (512 aa).

Residues 29 to 40 are mitochondrial targeting signal; the sequence is SRPQVPKGLKNP. Ser67 carries O-linked (GlcNAc) serine glycosylation. Phe224 is a binding site for substrate. Cys457 serves as a coordination point for heme.

The protein belongs to the cytochrome P450 family. In terms of assembly, interacts with cytosolic chaperones HSP70 and HSP90; this interaction is required for initial targeting to mitochondria. Interacts (via mitochondrial targeting signal) with TOMM40 (via N-terminus); this interaction is required for translocation across the mitochondrial outer membrane. Heme serves as cofactor. In terms of tissue distribution, lung, lymphocytes and placenta.

The protein resides in the endoplasmic reticulum membrane. Its subcellular location is the mitochondrion inner membrane. It is found in the microsome membrane. It localises to the cytoplasm. It carries out the reaction an organic molecule + reduced [NADPH--hemoprotein reductase] + O2 = an alcohol + oxidized [NADPH--hemoprotein reductase] + H2O + H(+). The catalysed reaction is estrone + reduced [NADPH--hemoprotein reductase] + O2 = 2-hydroxyestrone + oxidized [NADPH--hemoprotein reductase] + H2O + H(+). The enzyme catalyses estrone + reduced [NADPH--hemoprotein reductase] + O2 = 4-hydroxyestrone + oxidized [NADPH--hemoprotein reductase] + H2O + H(+). It catalyses the reaction estrone + reduced [NADPH--hemoprotein reductase] + O2 = 6alpha-hydroxyestrone + oxidized [NADPH--hemoprotein reductase] + H2O + H(+). It carries out the reaction estrone + reduced [NADPH--hemoprotein reductase] + O2 = 15alpha-hydroxyestrone + oxidized [NADPH--hemoprotein reductase] + H2O + H(+). The catalysed reaction is estrone + reduced [NADPH--hemoprotein reductase] + O2 = 16alpha-hydroxyestrone + oxidized [NADPH--hemoprotein reductase] + H2O + H(+). The enzyme catalyses 17beta-estradiol + reduced [NADPH--hemoprotein reductase] + O2 = 2-hydroxy-17beta-estradiol + oxidized [NADPH--hemoprotein reductase] + H2O + H(+). It catalyses the reaction 17beta-estradiol + reduced [NADPH--hemoprotein reductase] + O2 = 4-hydroxy-17beta-estradiol + oxidized [NADPH--hemoprotein reductase] + H2O + H(+). It carries out the reaction 17beta-estradiol + reduced [NADPH--hemoprotein reductase] + O2 = 6alpha-hydroxy-17beta-estradiol + oxidized [NADPH--hemoprotein reductase] + H2O + H(+). The catalysed reaction is 17beta-estradiol + reduced [NADPH--hemoprotein reductase] + O2 = 7alpha-hydroxy-17beta-estradiol + oxidized [NADPH--hemoprotein reductase] + H2O + H(+). The enzyme catalyses 17beta-estradiol + reduced [NADPH--hemoprotein reductase] + O2 = 15alpha-hydroxy-17beta-estradiol + oxidized [NADPH--hemoprotein reductase] + H2O + H(+). It catalyses the reaction (5Z,8Z,11Z)-eicosatrienoate + reduced [NADPH--hemoprotein reductase] + O2 = 19-hydroxy-(5Z,8Z,11Z)-eicosatrienoate + oxidized [NADPH--hemoprotein reductase] + H2O + H(+). It carries out the reaction (5Z,8Z,11Z,14Z)-eicosatetraenoate + reduced [NADPH--hemoprotein reductase] + O2 = 16-hydroxy-(5Z,8Z,11Z,14Z)-eicosatetraenoate + oxidized [NADPH--hemoprotein reductase] + H2O + H(+). The catalysed reaction is (5Z,8Z,11Z,14Z)-eicosatetraenoate + reduced [NADPH--hemoprotein reductase] + O2 = 17-hydroxy-(5Z,8Z,11Z,14Z)-eicosatetraenoate + oxidized [NADPH--hemoprotein reductase] + H2O + H(+). The enzyme catalyses (5Z,8Z,11Z,14Z)-eicosatetraenoate + reduced [NADPH--hemoprotein reductase] + O2 = 18-hydroxy-(5Z,8Z,11Z,14Z)-eicosatetraenoate + oxidized [NADPH--hemoprotein reductase] + H2O + H(+). It catalyses the reaction (5Z,8Z,11Z,14Z)-eicosatetraenoate + reduced [NADPH--hemoprotein reductase] + O2 = 19-hydroxy-(5Z,8Z,11Z,14Z)-eicosatetraenoate + oxidized [NADPH--hemoprotein reductase] + H2O + H(+). It carries out the reaction (5Z,8Z,11Z,14Z,17Z)-eicosapentaenoate + reduced [NADPH--hemoprotein reductase] + O2 = 19-hydroxy-(5Z,8Z,11Z,14Z,17Z)-eicosapentaenoate + oxidized [NADPH--hemoprotein reductase] + H2O + H(+). The catalysed reaction is (5Z,8Z,11Z,14Z)-eicosatetraenoate + reduced [NADPH--hemoprotein reductase] + O2 = (8R,9S)-epoxy-(5Z,11Z,14Z)-eicosatrienoate + oxidized [NADPH--hemoprotein reductase] + H2O + H(+). The enzyme catalyses (5Z,8Z,11Z,14Z)-eicosatetraenoate + reduced [NADPH--hemoprotein reductase] + O2 = (11R,12S)-epoxy-(5Z,8Z,14Z)-eicosatrienoate + oxidized [NADPH--hemoprotein reductase] + H2O + H(+). It catalyses the reaction (5Z,8Z,11Z,14Z)-eicosatetraenoate + reduced [NADPH--hemoprotein reductase] + O2 = (14S,15R)-epoxy-(5Z,8Z,11Z)-eicosatrienoate + oxidized [NADPH--hemoprotein reductase] + H2O + H(+). It carries out the reaction (5Z,8Z,11Z,14Z)-eicosatetraenoate + reduced [NADPH--hemoprotein reductase] + O2 = (14R,15S)-epoxy-(5Z,8Z,11Z)-eicosatrienoate + oxidized [NADPH--hemoprotein reductase] + H2O + H(+). The catalysed reaction is (5Z,8Z,11Z,14Z,17Z)-eicosapentaenoate + reduced [NADPH--hemoprotein reductase] + O2 = (17R,18S)-epoxy-(5Z,8Z,11Z,14Z)-eicosatetraenoate + oxidized [NADPH--hemoprotein reductase] + H2O + H(+). The enzyme catalyses (4Z,7Z,10Z,13Z,16Z,19Z)-docosahexaenoate + reduced [NADPH--hemoprotein reductase] + O2 = (19S,20R)-epoxy-(4Z,7Z,10Z,13Z,16Z)-docosapentaenoate + oxidized [NADPH--hemoprotein reductase] + H2O + H(+). It catalyses the reaction (4Z,7Z,10Z,13Z,16Z,19Z)-docosahexaenoate + reduced [NADPH--hemoprotein reductase] + O2 = (19R,20S)-epoxy-(4Z,7Z,10Z,13Z,16Z)-docosapentaenoate + oxidized [NADPH--hemoprotein reductase] + H2O + H(+). It carries out the reaction all-trans-retinol + reduced [NADPH--hemoprotein reductase] + O2 = all-trans-retinal + oxidized [NADPH--hemoprotein reductase] + 2 H2O + H(+). The catalysed reaction is all-trans-retinal + reduced [NADPH--hemoprotein reductase] + O2 = all-trans-retinoate + oxidized [NADPH--hemoprotein reductase] + H2O + 2 H(+). The enzyme catalyses (13S)-hydroperoxy-(9Z,11E)-octadecadienoate = 13-oxo-(9Z,11E)-octadecadienoate + H2O. It catalyses the reaction (12S)-hydroperoxy-(5Z,8Z,10E,14Z)-eicosatetraenoate = 12-oxo-(5Z,8Z,10E,14Z)-eicosatetraenoate + H2O. It carries out the reaction (15S)-hydroperoxy-(5Z,8Z,11Z,13E)-eicosatetraenoate = 15-oxo-(5Z,8Z,11Z,13E)-eicosatetraenoate + H2O. The catalysed reaction is (5S)-hydroperoxy-(6E,8Z,11Z,14Z)-eicosatetraenoate = 5-oxo-(6E,8Z,11Z,14Z)-eicosatetraenoate + H2O. It functions in the pathway steroid hormone biosynthesis. Its pathway is lipid metabolism; fatty acid metabolism. It participates in cofactor metabolism; retinol metabolism. Functionally, a cytochrome P450 monooxygenase involved in the metabolism of various endogenous substrates, including fatty acids, steroid hormones and vitamins. Mechanistically, uses molecular oxygen inserting one oxygen atom into a substrate, and reducing the second into a water molecule, with two electrons provided by NADPH via cytochrome P450 reductase (NADPH--hemoprotein reductase). Catalyzes the hydroxylation of carbon-hydrogen bonds. Exhibits high catalytic activity for the formation of hydroxyestrogens from estrone (E1) and 17beta-estradiol (E2), namely 2-hydroxy E1 and E2, as well as D-ring hydroxylated E1 and E2 at the C15-alpha and C16-alpha positions. Displays different regioselectivities for polyunsaturated fatty acids (PUFA) hydroxylation. Catalyzes the epoxidation of double bonds of certain PUFA. Converts arachidonic acid toward epoxyeicosatrienoic acid (EET) regioisomers, 8,9-, 11,12-, and 14,15-EET, that function as lipid mediators in the vascular system. Displays an absolute stereoselectivity in the epoxidation of eicosapentaenoic acid (EPA) producing the 17(R),18(S) enantiomer. May play an important role in all-trans retinoic acid biosynthesis in extrahepatic tissues. Catalyzes two successive oxidative transformation of all-trans retinol to all-trans retinal and then to the active form all-trans retinoic acid. May also participate in eicosanoids metabolism by converting hydroperoxide species into oxo metabolites (lipoxygenase-like reaction, NADPH-independent). This chain is Cytochrome P450 1A1, found in Homo sapiens (Human).